We begin with the raw amino-acid sequence, 765 residues long: BRCA1-associated RING domain protein 1 (765 aa).

The tract at residues 20 to 113 (MEPATDGLWA…KLQNLLHDNK (94 aa)) is required for BRCA1 binding. The RING-type zinc finger occupies 44 to 81 (CSRCANILKEPVCLGGCEHIFCSGCISDCVGSGCPVCY). K152 is covalently cross-linked (Glycyl lysine isopeptide (Lys-Gly) (interchain with G-Cter in SUMO2)). 3 disordered regions span residues 183 to 229 (AVPK…EELK), 299 to 328 (KDLR…GSNI), and 369 to 410 (NASD…MPAR). The segment covering 195–204 (SAKKHPKKSV) has biased composition (basic residues). Positions 207 to 229 (INREENLRPETKDSRFDSKEELK) are enriched in basic and acidic residues. Residues 316–328 (PTTSTSDSCGSNI) are compositionally biased toward polar residues. S378 is modified (phosphoserine). T381 carries the post-translational modification Phosphothreonine. The span at 391-403 (HRQMMSSPSTVKL) shows a compositional bias: polar residues. K411 participates in a covalent cross-link: Glycyl lysine isopeptide (Lys-Gly) (interchain with G-Cter in SUMO2). ANK repeat units follow at residues 415–447 (RGET…VKDH), 448–480 (AGWT…TPGY), and 481–513 (QNDS…AVNI). The ANK 4; degenerate repeat unit spans residues 514–534 (FGVRPVDYTDNENIRSLLLLP). The flexible linker stretch occupies residues 542–546 (TSQCS). BRCT domains lie at 549–641 (NTGQ…KYEV) and 655–765 (LLPK…PLDS).

Homo- and heterodimer. Heterodimer (RING-type zinc finger) with BRCA1. Heterodimer (via ANK repeats and BRCT domains) with CSTF1/CSTF-50. Component of the BRCA1-A complex, at least composed of the BRCA1, BARD1, UIMC1/RAP80, ABRAXAS1, BRCC3/BRCC36, BABAM2 and BABAM1/NBA1. Interacts with UBXN1. Post-translationally, processed during apoptosis. The homodimer is more susceptible to proteolytic cleavage than the BARD1/BRCA1 heterodimer.

Its subcellular location is the nucleus. The protein localises to the cytoplasm. The enzyme catalyses S-ubiquitinyl-[E2 ubiquitin-conjugating enzyme]-L-cysteine + [acceptor protein]-L-lysine = [E2 ubiquitin-conjugating enzyme]-L-cysteine + N(6)-ubiquitinyl-[acceptor protein]-L-lysine.. It functions in the pathway protein modification; protein ubiquitination. Functionally, E3 ubiquitin-protein ligase. The BRCA1-BARD1 heterodimer specifically mediates the formation of 'Lys-6'-linked polyubiquitin chains and coordinates a diverse range of cellular pathways such as DNA damage repair, ubiquitination and transcriptional regulation to maintain genomic stability. Plays a central role in the control of the cell cycle in response to DNA damage. Acts by mediating ubiquitin E3 ligase activity that is required for its tumor suppressor function. Also forms a heterodimer with CSTF1/CSTF-50 to modulate mRNA processing and RNAP II stability by inhibiting pre-mRNA 3' cleavage. The polypeptide is BRCA1-associated RING domain protein 1 (Bard1) (Mus musculus (Mouse)).